Reading from the N-terminus, the 201-residue chain is Cytochrome c4 (201 aa).

Residues 1–20 (MNKLLVSLLLTLGLTGLAHA) form the signal peptide. The heme c site is built by Cys34, Cys37, His38, Met77, Cys130, Cys133, His134, and Met178.

In terms of processing, binds 2 heme c groups covalently per subunit.

It is found in the periplasm. Functionally, diheme, high potential cytochrome c believed to be an intermediate electron donor to terminal oxidation systems. This is Cytochrome c4 (cc4) from Pseudomonas aeruginosa (strain ATCC 15692 / DSM 22644 / CIP 104116 / JCM 14847 / LMG 12228 / 1C / PRS 101 / PAO1).